The following is a 274-amino-acid chain: Orotidine 5'-phosphate decarboxylase (274 aa).

Lys-96 functions as the Proton donor in the catalytic mechanism.

Belongs to the OMP decarboxylase family. Type 2 subfamily.

The catalysed reaction is orotidine 5'-phosphate + H(+) = UMP + CO2. It functions in the pathway pyrimidine metabolism; UMP biosynthesis via de novo pathway; UMP from orotate: step 2/2. In Bacteroides fragilis (strain ATCC 25285 / DSM 2151 / CCUG 4856 / JCM 11019 / LMG 10263 / NCTC 9343 / Onslow / VPI 2553 / EN-2), this protein is Orotidine 5'-phosphate decarboxylase.